The primary structure comprises 743 residues: Inhibitor of nuclear factor kappa-B kinase subunit alpha (743 aa).

Residues 15 to 300 (WDMKDRLGTG…MDCGRPQCFV (286 aa)) form the Protein kinase domain. ATP contacts are provided by residues 21–29 (LGTGGFGNV) and lysine 44. Aspartate 144 acts as the Proton acceptor in catalysis. The leucine-zipper stretch occupies residues 453 to 474 (LLRFNTNLTKMKNTMVSASQQL). The tract at residues 736-741 (LDFSWL) is NEMO-binding.

It belongs to the protein kinase superfamily. Ser/Thr protein kinase family. I-kappa-B kinase subfamily.

The protein localises to the cytoplasm. The protein resides in the nucleus. It catalyses the reaction L-seryl-[I-kappa-B protein] + ATP = O-phospho-L-seryl-[I-kappa-B protein] + ADP + H(+). With respect to regulation, activated when phosphorylated and inactivated when dephosphorylated. Phosphorylates inhibitors of NF-kappa-B thus leading to the dissociation of the inhibitor/NF-kappa-B complex and ultimately the degradation of the inhibitor. Phosphorylates 'Ser-10' of histone H3 at NF-kappa-B-regulated promoters during inflammatory responses triggered by cytokines. In Xenopus tropicalis (Western clawed frog), this protein is Inhibitor of nuclear factor kappa-B kinase subunit alpha (chuk).